The sequence spans 255 residues: Proteasome subunit alpha (255 aa).

The segment covering 190-201 has biased composition (polar residues); the sequence is PSTSGASGNGET. The tract at residues 190-255 is disordered; it reads PSTSGASGNG…DKSSGDGEQN (66 aa). Over residues 202 to 217 the composition is skewed to basic and acidic residues; that stretch reads EPSKLEVAILDRERPG.

This sequence belongs to the peptidase T1A family. In terms of assembly, the 20S proteasome core is composed of 14 alpha and 14 beta subunits that assemble into four stacked heptameric rings, resulting in a barrel-shaped structure. The two inner rings, each composed of seven catalytic beta subunits, are sandwiched by two outer rings, each composed of seven alpha subunits. The catalytic chamber with the active sites is on the inside of the barrel. Has a gated structure, the ends of the cylinder being occluded by the N-termini of the alpha-subunits. Is capped by the proteasome-associated ATPase, ARC.

The protein localises to the cytoplasm. The protein operates within protein degradation; proteasomal Pup-dependent pathway. Its activity is regulated as follows. The formation of the proteasomal ATPase ARC-20S proteasome complex, likely via the docking of the C-termini of ARC into the intersubunit pockets in the alpha-rings, may trigger opening of the gate for substrate entry. Interconversion between the open-gate and close-gate conformations leads to a dynamic regulation of the 20S proteasome proteolysis activity. Its function is as follows. Component of the proteasome core, a large protease complex with broad specificity involved in protein degradation. In Saccharomonospora viridis (strain ATCC 15386 / DSM 43017 / JCM 3036 / CCUG 5913 / NBRC 12207 / NCIMB 9602 / P101) (Thermoactinomyces viridis), this protein is Proteasome subunit alpha.